We begin with the raw amino-acid sequence, 647 residues long: Acetyl-coenzyme A synthetase (647 aa).

Residues 190-193, threonine 310, and asparagine 334 each bind CoA; that span reads RGGK. ATP is bound by residues 386–388, 410–415, aspartate 499, and arginine 514; these read GEP and DTWWQT. Serine 522 is a CoA binding site. Residue arginine 525 coordinates ATP. Mg(2+) is bound by residues valine 536, histidine 538, and valine 541. Arginine 583 contributes to the CoA binding site. An N6-acetyllysine modification is found at lysine 608.

The protein belongs to the ATP-dependent AMP-binding enzyme family. Mg(2+) serves as cofactor. In terms of processing, acetylated. Deacetylation by the SIR2-homolog deacetylase activates the enzyme.

The enzyme catalyses acetate + ATP + CoA = acetyl-CoA + AMP + diphosphate. In terms of biological role, catalyzes the conversion of acetate into acetyl-CoA (AcCoA), an essential intermediate at the junction of anabolic and catabolic pathways. AcsA undergoes a two-step reaction. In the first half reaction, AcsA combines acetate with ATP to form acetyl-adenylate (AcAMP) intermediate. In the second half reaction, it can then transfer the acetyl group from AcAMP to the sulfhydryl group of CoA, forming the product AcCoA. The sequence is that of Acetyl-coenzyme A synthetase from Xanthomonas oryzae pv. oryzae (strain MAFF 311018).